Consider the following 390-residue polypeptide: DNA polymerase IV (390 aa).

Positions 6–187 constitute a UmuC domain; sequence VMHVDLDAFF…LDISIMPGIG (182 aa). 2 residues coordinate Mg(2+): Asp10 and Asp105. Glu106 is an active-site residue.

The protein belongs to the DNA polymerase type-Y family. Monomer. Mg(2+) is required as a cofactor.

It localises to the cytoplasm. The enzyme catalyses DNA(n) + a 2'-deoxyribonucleoside 5'-triphosphate = DNA(n+1) + diphosphate. Its function is as follows. Poorly processive, error-prone DNA polymerase involved in untargeted mutagenesis. Copies undamaged DNA at stalled replication forks, which arise in vivo from mismatched or misaligned primer ends. These misaligned primers can be extended by PolIV. Exhibits no 3'-5' exonuclease (proofreading) activity. May be involved in translesional synthesis, in conjunction with the beta clamp from PolIII. The chain is DNA polymerase IV from Dehalococcoides mccartyi (strain ATCC BAA-2266 / KCTC 15142 / 195) (Dehalococcoides ethenogenes (strain 195)).